A 232-amino-acid polypeptide reads, in one-letter code: Cytidylate kinase (232 aa).

10-18 (GPAASGKST) serves as a coordination point for ATP.

The protein belongs to the cytidylate kinase family. Type 1 subfamily.

The protein localises to the cytoplasm. It carries out the reaction CMP + ATP = CDP + ADP. The catalysed reaction is dCMP + ATP = dCDP + ADP. This is Cytidylate kinase from Phytoplasma mali (strain AT).